Here is an 88-residue protein sequence, read N- to C-terminus: Guanine nucleotide-binding protein subunit gamma (88 aa).

A lipid anchor (S-palmitoyl cysteine) is attached at C84. C85 carries the cysteine methyl ester modification. C85 carries the S-farnesyl cysteine lipid modification. Positions T86–M88 are cleaved as a propeptide — removed in mature form.

It belongs to the G protein gamma family. G proteins are composed of 3 units, alpha, beta and gamma.

It is found in the membrane. The sequence is that of Guanine nucleotide-binding protein subunit gamma from Candida glabrata (strain ATCC 2001 / BCRC 20586 / JCM 3761 / NBRC 0622 / NRRL Y-65 / CBS 138) (Yeast).